Reading from the N-terminus, the 1017-residue chain is Disease resistance protein RML1B (1017 aa).

The TIR domain occupies 12–176; that stretch reads YKFNVFASFH…KIARDVLDKL (165 aa). Glutamate 87 is a catalytic residue. Residues 191-447 enclose the NB-ARC domain; it reads EAHLREIKSL…HIAIFFNKED (257 aa). LRR repeat units follow at residues 539 to 562, 583 to 605, 606 to 628, 629 to 652, 654 to 675, 676 to 698, 699 to 724, 738 to 760, 761 to 782, and 784 to 809; these read ISRI…QFLK, PCLL…TFNP, EHLV…TQPL, KNLK…SNAT, LEYL…ISHL, HKLE…HMNL, ESLQ…NIRY, CPGL…THLP, TSLT…CFKS, and HQLK…SLLT.

It catalyses the reaction NAD(+) + H2O = ADP-D-ribose + nicotinamide + H(+). Its function is as follows. TIR-NB-LRR receptor-like protein that confers resistance to the pathogen Leptosphaeria maculans (blackleg disease). This chain is Disease resistance protein RML1B, found in Arabidopsis thaliana (Mouse-ear cress).